Reading from the N-terminus, the 214-residue chain is Thiamine-phosphate synthase (214 aa).

4-amino-2-methyl-5-(diphosphooxymethyl)pyrimidine is bound by residues 37–41 and Asn73; that span reads QYREK. Asp74 and Asp93 together coordinate Mg(2+). Ser112 provides a ligand contact to 4-amino-2-methyl-5-(diphosphooxymethyl)pyrimidine. 139–141 contacts 2-[(2R,5Z)-2-carboxy-4-methylthiazol-5(2H)-ylidene]ethyl phosphate; it reads TIS. Lys142 is a binding site for 4-amino-2-methyl-5-(diphosphooxymethyl)pyrimidine. Residues Gly171 and 191–192 each bind 2-[(2R,5Z)-2-carboxy-4-methylthiazol-5(2H)-ylidene]ethyl phosphate; that span reads IS.

This sequence belongs to the thiamine-phosphate synthase family. Mg(2+) serves as cofactor.

The enzyme catalyses 2-[(2R,5Z)-2-carboxy-4-methylthiazol-5(2H)-ylidene]ethyl phosphate + 4-amino-2-methyl-5-(diphosphooxymethyl)pyrimidine + 2 H(+) = thiamine phosphate + CO2 + diphosphate. It catalyses the reaction 2-(2-carboxy-4-methylthiazol-5-yl)ethyl phosphate + 4-amino-2-methyl-5-(diphosphooxymethyl)pyrimidine + 2 H(+) = thiamine phosphate + CO2 + diphosphate. It carries out the reaction 4-methyl-5-(2-phosphooxyethyl)-thiazole + 4-amino-2-methyl-5-(diphosphooxymethyl)pyrimidine + H(+) = thiamine phosphate + diphosphate. It functions in the pathway cofactor biosynthesis; thiamine diphosphate biosynthesis; thiamine phosphate from 4-amino-2-methyl-5-diphosphomethylpyrimidine and 4-methyl-5-(2-phosphoethyl)-thiazole: step 1/1. Functionally, condenses 4-methyl-5-(beta-hydroxyethyl)thiazole monophosphate (THZ-P) and 2-methyl-4-amino-5-hydroxymethyl pyrimidine pyrophosphate (HMP-PP) to form thiamine monophosphate (TMP). This chain is Thiamine-phosphate synthase, found in Listeria monocytogenes serotype 4a (strain HCC23).